Here is a 305-residue protein sequence, read N- to C-terminus: Recombination-associated protein RdgC (305 aa).

Belongs to the RdgC family.

It is found in the cytoplasm. The protein resides in the nucleoid. Its function is as follows. May be involved in recombination. This is Recombination-associated protein RdgC from Sodalis glossinidius (strain morsitans).